The chain runs to 148 residues: Ribosome-binding factor A (148 aa).

Residues 120–148 (AKAREGASYAGDADPYRTAEPDADDAPRA) form a disordered region. The segment covering 133 to 148 (DPYRTAEPDADDAPRA) has biased composition (basic and acidic residues).

It belongs to the RbfA family. Monomer. Binds 30S ribosomal subunits, but not 50S ribosomal subunits or 70S ribosomes.

The protein resides in the cytoplasm. In terms of biological role, one of several proteins that assist in the late maturation steps of the functional core of the 30S ribosomal subunit. Associates with free 30S ribosomal subunits (but not with 30S subunits that are part of 70S ribosomes or polysomes). Required for efficient processing of 16S rRNA. May interact with the 5'-terminal helix region of 16S rRNA. This is Ribosome-binding factor A from Micrococcus luteus (strain ATCC 4698 / DSM 20030 / JCM 1464 / CCM 169 / CCUG 5858 / IAM 1056 / NBRC 3333 / NCIMB 9278 / NCTC 2665 / VKM Ac-2230) (Micrococcus lysodeikticus).